The sequence spans 640 residues: 1-deoxy-D-xylulose-5-phosphate synthase (640 aa).

Thiamine diphosphate-binding positions include His-77 and 118–120 (AHA). A Mg(2+)-binding site is contributed by Asp-149. Residues 150 to 151 (GS), Asn-178, Tyr-287, and Glu-369 each bind thiamine diphosphate. Asn-178 contributes to the Mg(2+) binding site.

This sequence belongs to the transketolase family. DXPS subfamily. As to quaternary structure, homodimer. Requires Mg(2+) as cofactor. Thiamine diphosphate serves as cofactor.

It carries out the reaction D-glyceraldehyde 3-phosphate + pyruvate + H(+) = 1-deoxy-D-xylulose 5-phosphate + CO2. Its pathway is metabolic intermediate biosynthesis; 1-deoxy-D-xylulose 5-phosphate biosynthesis; 1-deoxy-D-xylulose 5-phosphate from D-glyceraldehyde 3-phosphate and pyruvate: step 1/1. Its function is as follows. Catalyzes the acyloin condensation reaction between C atoms 2 and 3 of pyruvate and glyceraldehyde 3-phosphate to yield 1-deoxy-D-xylulose-5-phosphate (DXP). This Caulobacter vibrioides (strain NA1000 / CB15N) (Caulobacter crescentus) protein is 1-deoxy-D-xylulose-5-phosphate synthase.